We begin with the raw amino-acid sequence, 155 residues long: Ribonuclease H (155 aa).

The RNase H type-1 domain maps to 1-142; sequence MLKQVEIFTD…CDELARAAAS (142 aa). Mg(2+)-binding residues include Asp10, Glu48, Asp70, and Asp134.

The protein belongs to the RNase H family. As to quaternary structure, monomer. Requires Mg(2+) as cofactor.

The protein localises to the cytoplasm. It carries out the reaction Endonucleolytic cleavage to 5'-phosphomonoester.. Endonuclease that specifically degrades the RNA of RNA-DNA hybrids. The protein is Ribonuclease H of Klebsiella pneumoniae (strain 342).